The following is a 105-amino-acid chain: Replication restart protein PriB (105 aa).

In terms of domain architecture, SSB spans 1–102 (MTTNRLVLSG…LHAEQIEFID (102 aa)).

The protein belongs to the PriB family. Homodimer. Interacts with PriA and DnaT. Component of the replication restart primosome. Primosome assembly occurs via a 'hand-off' mechanism. PriA binds to replication forks, subsequently PriB then DnaT bind; DnaT then displaces ssDNA to generate the helicase loading substrate.

In terms of biological role, involved in the restart of stalled replication forks, which reloads the replicative helicase on sites other than the origin of replication; the PriA-PriB pathway is the major replication restart pathway. During primosome assembly it facilitates complex formation between PriA and DnaT on DNA; stabilizes PriA on DNA. Stimulates the DNA unwinding activity of PriA helicase. This is Replication restart protein PriB from Yersinia pseudotuberculosis serotype O:1b (strain IP 31758).